A 209-amino-acid polypeptide reads, in one-letter code: Uracil phosphoribosyltransferase (209 aa).

Residues arginine 79, arginine 104, and 131 to 139 (DPMLATGNS) contribute to the 5-phospho-alpha-D-ribose 1-diphosphate site. Residues isoleucine 194 and 199–201 (GDA) each bind uracil. Residue aspartate 200 participates in 5-phospho-alpha-D-ribose 1-diphosphate binding.

It belongs to the UPRTase family. Requires Mg(2+) as cofactor.

The enzyme catalyses UMP + diphosphate = 5-phospho-alpha-D-ribose 1-diphosphate + uracil. It participates in pyrimidine metabolism; UMP biosynthesis via salvage pathway; UMP from uracil: step 1/1. Its activity is regulated as follows. Allosterically activated by GTP. Catalyzes the conversion of uracil and 5-phospho-alpha-D-ribose 1-diphosphate (PRPP) to UMP and diphosphate. The protein is Uracil phosphoribosyltransferase of Sinorhizobium fredii (strain NBRC 101917 / NGR234).